The chain runs to 664 residues: Frizzled-3 (664 aa).

Residues 1-16 form the signal peptide; it reads MAAYLISFIWVSVILA. The Extracellular portion of the chain corresponds to 17–204; that stretch reads QKSMGHSLFA…REELSFARYF (188 aa). The FZ domain occupies 22–135; the sequence is HSLFACEPIT…CSRFPDCDEP (114 aa). Intrachain disulfides connect C27/C88, C35/C81, C72/C109, C98/C132, and C102/C126. Residue N41 is glycosylated (N-linked (GlcNAc...) asparagine). Residues 205–225 traverse the membrane as a helical segment; sequence IGVISIVCLSATLFTFLTFLI. Residues 226-236 are Cytoplasmic-facing; that stretch reads DVTRFRYPERP. The chain crosses the membrane as a helical span at residues 237–257; it reads IIFYAVCYMMVSLIFFIGFLL. The Extracellular portion of the chain corresponds to 258–287; that stretch reads EDKVACNGANPSQYKASTVTQGSHNKACTM. Residues 288 to 308 form a helical membrane-spanning segment; it reads LFMVLYFFTMAGSVWWVILTI. At 309-327 the chain is on the cytoplasmic side; it reads TWFLAAVPKWGSEAIEKKA. A helical transmembrane segment spans residues 328–348; sequence LLFHASAWGIPGTLTIILLAM. At 349–373 the chain is on the extracellular side; it reads NKIEGDNISGVCFVGLYDVHALRYF. N355 carries an N-linked (GlcNAc...) asparagine glycan. Residues 374-394 form a helical membrane-spanning segment; the sequence is VLAPLCLDVVVGVSLLLAGII. The Cytoplasmic portion of the chain corresponds to 395–419; that stretch reads SLNRVRIEIPLEKENQDKLVKFMIR. The chain crosses the membrane as a helical span at residues 420–440; the sequence is IGVFSILYLVPLLVVIGCYFY. Residues 441 to 476 lie on the Extracellular side of the membrane; that stretch reads EQAYRGVWETTWVQERCREYHIPCPYKVTQTSRPDL. A helical transmembrane segment spans residues 477–497; the sequence is ILFLMKYLMLLVVGIPSVFWV. Topologically, residues 498–664 are cytoplasmic; it reads GSKKTCFEWA…RVIEADATSA (167 aa). The Lys-Thr-X-X-X-Trp motif, mediates interaction with the PDZ domain of Dvl family members motif lies at 501 to 506; it reads KTCFEW. The tract at residues 537-664 is disordered; sequence RDPNTPIVRK…RVIEADATSA (128 aa). Composition is skewed to polar residues over residues 549–564 and 573–585; these read GTST…STQL and KAGS…SSYH.

Belongs to the G-protein coupled receptor Fz/Smo family. As to expression, expression restricted to the early nervous system.

Its subcellular location is the membrane. It localises to the cell membrane. It is found in the cell surface. The protein resides in the apical cell membrane. In terms of biological role, receptor for Wnt proteins. Most of frizzled receptors are coupled to the beta-catenin canonical signaling pathway, which leads to the activation of disheveled proteins, inhibition of GSK-3 kinase, nuclear accumulation of beta-catenin and activation of Wnt target genes. A second signaling pathway involving PKC and calcium fluxes has been seen for some family members, but it is not yet clear if it represents a distinct pathway or if it can be integrated in the canonical pathway, as PKC seems to be required for Wnt-mediated inactivation of GSK-3 kinase. Both pathways seem to involve interactions with G-proteins. Activated by Wnt8. Involved in transduction and intercellular transmission of polarity information during tissue morphogenesis and/or in differentiated tissues. Plays a role in controlling early axon growth and guidance processes necessary for the formation of a subset of central and peripheral major fiber tracts. Involved in the migration of cranial neural crest cells. May also be implicated in the transmission of sensory information from the trunk and limbs to the brain. Controls commissural sensory axons guidance after midline crossing along the anterior-posterior axis in the developing spinal cord in a Wnt-dependent signaling pathway. Together with FZD6, is involved in the neural tube closure and plays a role in the regulation of the establishment of planar cell polarity (PCP). Promotes neurogenesis by maintaining sympathetic neuroblasts within the cell cycle in a beta-catenin-dependent manner. This is Frizzled-3 (fzd3) from Xenopus laevis (African clawed frog).